The following is a 217-amino-acid chain: ATP phosphoribosyltransferase (217 aa).

It belongs to the ATP phosphoribosyltransferase family. Short subfamily. As to quaternary structure, heteromultimer composed of HisG and HisZ subunits.

The protein resides in the cytoplasm. The catalysed reaction is 1-(5-phospho-beta-D-ribosyl)-ATP + diphosphate = 5-phospho-alpha-D-ribose 1-diphosphate + ATP. It participates in amino-acid biosynthesis; L-histidine biosynthesis; L-histidine from 5-phospho-alpha-D-ribose 1-diphosphate: step 1/9. Catalyzes the condensation of ATP and 5-phosphoribose 1-diphosphate to form N'-(5'-phosphoribosyl)-ATP (PR-ATP). Has a crucial role in the pathway because the rate of histidine biosynthesis seems to be controlled primarily by regulation of HisG enzymatic activity. The protein is ATP phosphoribosyltransferase of Parasynechococcus marenigrum (strain WH8102).